Consider the following 274-residue polypeptide: MAVIKIKPTSPGQRGAVKISRDHLYKGEAFAGLLEPQFQKAGRNNNGHITTRHKGGGHKHHYRVVDFRRNKDAIPAKVERIEYDPNRTAHIALVCYADGERRYIIAPRNLEVGATIVSGSEAPIRVGNTLPIRNIPVGSTIHCIELKPGAGAQIARSAGTSATLLAREGVYAQVRMRSGEVRKIHIECRATIGEVANEEHSLRQLGKAGVKRWMGIRPTVRGVAMNPIDHPHGGGEGRTGEGRHAVDPWGNLTKGYRTRNNKRTQVMIVSRRKK.

The interval 224–256 (AMNPIDHPHGGGEGRTGEGRHAVDPWGNLTKGY) is disordered. Basic and acidic residues predominate over residues 229 to 246 (DHPHGGGEGRTGEGRHAV).

It belongs to the universal ribosomal protein uL2 family. As to quaternary structure, part of the 50S ribosomal subunit. Forms a bridge to the 30S subunit in the 70S ribosome.

In terms of biological role, one of the primary rRNA binding proteins. Required for association of the 30S and 50S subunits to form the 70S ribosome, for tRNA binding and peptide bond formation. It has been suggested to have peptidyltransferase activity; this is somewhat controversial. Makes several contacts with the 16S rRNA in the 70S ribosome. This Acidovorax sp. (strain JS42) protein is Large ribosomal subunit protein uL2.